The sequence spans 813 residues: LPS-assembly protein LptD (813 aa).

The N-terminal stretch at 1–22 (MRRALRLLPLPLSIAICLPAMA) is a signal peptide.

The protein belongs to the LptD family. In terms of assembly, component of the lipopolysaccharide transport and assembly complex. Interacts with LptE and LptA.

It is found in the cell outer membrane. Together with LptE, is involved in the assembly of lipopolysaccharide (LPS) at the surface of the outer membrane. The protein is LPS-assembly protein LptD of Xanthomonas axonopodis pv. citri (strain 306).